Consider the following 236-residue polypeptide: Small ribosomal subunit protein bS21m (236 aa).

The interval 65 to 136 (KPAAGAAAGG…SSKPSPMQTW (72 aa)) is disordered. Residues 107–131 (SNSSTSSSSSSSSSGGALYSSSKPS) show a composition bias toward low complexity.

This sequence belongs to the bacterial ribosomal protein bS21 family. As to quaternary structure, component of the mitochondrial small ribosomal subunit (mt-SSU). Mature N.crassa 74S mitochondrial ribosomes consist of a small (37S) and a large (54S) subunit. The 37S small subunit contains a 16S ribosomal RNA (16S mt-rRNA) and 32 different proteins. The 54S large subunit contains a 23S rRNA (23S mt-rRNA) and 42 different proteins.

It localises to the mitochondrion. Functionally, component of the mitochondrial ribosome (mitoribosome), a dedicated translation machinery responsible for the synthesis of mitochondrial genome-encoded proteins, including at least some of the essential transmembrane subunits of the mitochondrial respiratory chain. The mitoribosomes are attached to the mitochondrial inner membrane and translation products are cotranslationally integrated into the membrane. The polypeptide is Small ribosomal subunit protein bS21m (mrp21) (Neurospora crassa (strain ATCC 24698 / 74-OR23-1A / CBS 708.71 / DSM 1257 / FGSC 987)).